Reading from the N-terminus, the 254-residue chain is NH(3)-dependent NAD(+) synthetase (254 aa).

32 to 39 contributes to the ATP binding site; that stretch reads GISGGIDS. D38 is a Mg(2+) binding site. Deamido-NAD(+) is bound at residue R113. T133 serves as a coordination point for ATP. Position 138 (E138) interacts with Mg(2+). Deamido-NAD(+)-binding residues include K146 and D153. ATP-binding residues include K162 and T184. Residue 244–245 participates in deamido-NAD(+) binding; it reads HK.

Belongs to the NAD synthetase family. Homodimer.

It carries out the reaction deamido-NAD(+) + NH4(+) + ATP = AMP + diphosphate + NAD(+) + H(+). It functions in the pathway cofactor biosynthesis; NAD(+) biosynthesis; NAD(+) from deamido-NAD(+) (ammonia route): step 1/1. Its function is as follows. Catalyzes the ATP-dependent amidation of deamido-NAD to form NAD. Uses ammonia as a nitrogen source. The sequence is that of NH(3)-dependent NAD(+) synthetase from Thermococcus kodakarensis (strain ATCC BAA-918 / JCM 12380 / KOD1) (Pyrococcus kodakaraensis (strain KOD1)).